The primary structure comprises 232 residues: Myb-related protein 308 (232 aa).

HTH myb-type domains follow at residues 9-61 and 62-116; these read KAHT…INYL and RPDL…RRKL. 2 DNA-binding regions (H-T-H motif) span residues 37–61 and 89–112; these read WRSL…INYL and WSLI…NTHI.

In terms of tissue distribution, expressed in roots, stems, leaves, seed pods and flowers.

Its subcellular location is the nucleus. Transcription factor. The polypeptide is Myb-related protein 308 (Antirrhinum majus (Garden snapdragon)).